Reading from the N-terminus, the 327-residue chain is Poly(ribitol-phosphate) beta-N-acetylglucosaminyltransferase TarP (327 aa).

UDP-N-acetyl-alpha-D-glucosamine-binding positions include Pro-9, Asp-41, Asn-68, Arg-76, and Asp-92–Asp-94. Mn(2+) is bound at residue Asp-94. Asp-181 acts as the Proton acceptor in catalysis.

The protein belongs to the glycosyltransferase 2 family. As to quaternary structure, homotrimer. Mn(2+) serves as cofactor.

The enzyme catalyses 4-O-[(D-ribitylphospho)(n)-di{(2R)-glycerylphospho}]-N-acetyl-beta-D-mannosaminyl-(1-&gt;4)-N-acetyl-alpha-D-glucosaminyl di-trans,octa-cis-undecaprenyl diphosphate + n UDP-N-acetyl-alpha-D-glucosamine = 4-O-([3-N-acetyl-beta-D-glucosaminyl-1-D-ribitylphospho](n)-di{[2R]-1-glycerylphospho})-N-acetyl-beta-D-mannosaminyl-(1-&gt;4)-N-acetyl-alpha-D-glucosaminyl di-trans,octa-cis-undecaprenyl diphosphate + n UDP + n H(+). It participates in cell wall biogenesis; poly(ribitol phosphate) teichoic acid biosynthesis. In terms of biological role, attaches beta-O-GlcNAc (beta-O-N-acetyl-D-glucosamine) residues to the C3 position of poly(RboP)-wall teichoic acids (WTAs). Attenuates immunogenicity of WTA and protects S.aureus against adaptative host defenses by allowing bacteria to evade recognition by preexisting anti-S.aureus antibodies. Also protects the cell from podophage infection. This chain is Poly(ribitol-phosphate) beta-N-acetylglucosaminyltransferase TarP, found in Staphylococcus aureus (strain N315).